The sequence spans 1092 residues: Myelin regulatory factor (1092 aa).

Residues 1–730 (MDVEDENETL…CVSQRFLQAT (730 aa)) lie on the Cytoplasmic side of the membrane. Disordered stretches follow at residues 145–168 (SYAA…PQQL), 187–210 (PPSR…SIHQ), and 258–282 (QQHG…TNTL). Positions 196 to 205 (PPHLQGPLPP) are enriched in pro residues. The segment at residues 246–507 (AQQSQMLHQL…SNPGQFESDS (262 aa)) is a DNA-binding region (NDT80). Positions 553–662 (SDIRAKESVE…KLTDNLETRI (110 aa)) constitute a Peptidase S74 domain. Residues 646 to 677 (GAVKELCKLTDNLETRIDELERWSHKLAKLRR) adopt a coiled-coil conformation. The segment covering 681–695 (MKSTNSHTGSSQFSR) has biased composition (polar residues). A disordered region spans residues 681–714 (MKSTNSHTGSSQFSRAGSVPYKQRPPKVMGKTVP). A helical transmembrane segment spans residues 731-751 (IIALVIIMAFSVISMTTLYVL). Residues 752 to 1092 (NLRSEDDMLG…YYFRFYRLCD (341 aa)) are Lumenal-facing. 2 disordered regions span residues 798–817 (TTQL…SPDW) and 849–945 (ITRK…DSRY). 2 stretches are compositionally biased toward polar residues: residues 849-867 (ITRK…TDPA) and 928-945 (TPIT…DSRY). Asn941, Asn961, Asn974, and Asn996 each carry an N-linked (GlcNAc...) asparagine glycan.

It belongs to the MRF family. Homotrimer. Post-translationally, follows autocatalytic cleavage via the peptidase S74 domain. Autoprocessing is apparently constitutive and is essential for transcriptional activity.

It is found in the endoplasmic reticulum membrane. Its subcellular location is the nucleus. The protein resides in the cytoplasm. Constitutes a precursor of the transcription factor. Mediates the autocatalytic cleavage that releases the Myelin regulatory factor, N-terminal component that specifically activates transcription of central nervous system (CNS) myelin genes. Functionally, membrane-bound part that has no transcription factor activity and remains attached to the endoplasmic reticulum membrane following cleavage. In terms of biological role, transcription factor that specifically activates expression of myelin genes during oligodendrocyte (OL) maturation, thereby playing a central role in oligodendrocyte maturation and CNS myelination. This Xenopus laevis (African clawed frog) protein is Myelin regulatory factor (myrf).